The following is a 90-amino-acid chain: Small ribosomal subunit protein uS15 (90 aa).

Belongs to the universal ribosomal protein uS15 family. As to quaternary structure, part of the 30S ribosomal subunit. Forms a bridge to the 50S subunit in the 70S ribosome, contacting the 23S rRNA.

One of the primary rRNA binding proteins, it binds directly to 16S rRNA where it helps nucleate assembly of the platform of the 30S subunit by binding and bridging several RNA helices of the 16S rRNA. Its function is as follows. Forms an intersubunit bridge (bridge B4) with the 23S rRNA of the 50S subunit in the ribosome. In Tropheryma whipplei (strain TW08/27) (Whipple's bacillus), this protein is Small ribosomal subunit protein uS15.